We begin with the raw amino-acid sequence, 144 residues long: MKLLVKKLREDAALPFYATSGASGLDLFCVDDVVVIRPFERVLVSTGIAIELPEGYEAQIRPRSGLALKKGVTVLNSPGTIDHDYRGEIKVILINLSDKEVIIEKGERIAQMVIVPVLKVEVVEAKELSNTQRQDGGFGSTGMK.

Substrate-binding positions include 63-65 (RSG), Asn-76, 80-82 (TID), and Lys-90.

It belongs to the dUTPase family. Mg(2+) is required as a cofactor.

It carries out the reaction dUTP + H2O = dUMP + diphosphate + H(+). The protein operates within pyrimidine metabolism; dUMP biosynthesis; dUMP from dCTP (dUTP route): step 2/2. In terms of biological role, this enzyme is involved in nucleotide metabolism: it produces dUMP, the immediate precursor of thymidine nucleotides and it decreases the intracellular concentration of dUTP so that uracil cannot be incorporated into DNA. This Hydrogenobaculum sp. (strain Y04AAS1) protein is Deoxyuridine 5'-triphosphate nucleotidohydrolase.